The primary structure comprises 65 residues: Large ribosomal subunit protein bL35 (65 aa).

The segment covering 1–11 has biased composition (basic residues); that stretch reads MPKIKTRRSAA. Disordered stretches follow at residues 1-24 and 41-65; these read MPKI…KFKR and RMRL…MPYA.

It belongs to the bacterial ribosomal protein bL35 family.

In Nitratidesulfovibrio vulgaris (strain DSM 19637 / Miyazaki F) (Desulfovibrio vulgaris), this protein is Large ribosomal subunit protein bL35.